Reading from the N-terminus, the 335-residue chain is DNA-directed RNA polymerase subunit alpha (335 aa).

The tract at residues 1–233 is alpha N-terminal domain (alpha-NTD); it reads MMLNATEFLT…QQISIFVDLE (233 aa). The interval 247-335 is alpha C-terminal domain (alpha-CTD); sequence VDPVLLRPVD…VDDRFSYRSR (89 aa).

The protein belongs to the RNA polymerase alpha chain family. In terms of assembly, homodimer. The RNAP catalytic core consists of 2 alpha, 1 beta, 1 beta' and 1 omega subunit. When a sigma factor is associated with the core the holoenzyme is formed, which can initiate transcription.

It carries out the reaction RNA(n) + a ribonucleoside 5'-triphosphate = RNA(n+1) + diphosphate. Functionally, DNA-dependent RNA polymerase catalyzes the transcription of DNA into RNA using the four ribonucleoside triphosphates as substrates. The polypeptide is DNA-directed RNA polymerase subunit alpha (Psychrobacter arcticus (strain DSM 17307 / VKM B-2377 / 273-4)).